Consider the following 154-residue polypeptide: Golgi-associated plant pathogenesis-related protein 1 (154 aa).

The interval 1 to 21 (MGKSASKQFHNEVLKAHNEYR) is disordered. The N-myristoyl glycine moiety is linked to residue Gly-2. Over residues 9–21 (FHNEVLKAHNEYR) the composition is skewed to basic and acidic residues. Residues 14-132 (LKAHNEYRQK…SDGSSFVVAR (119 aa)) form the SCP domain. The stretch at 30 to 53 (KLCKNLNREAQQYSEALASTRILK) forms a coiled coil. Residues 91-98 (NFQQPGFT) are interaction with CAV1.

The protein belongs to the CRISP family. In terms of assembly, homodimer. Interacts with CAV1. As to expression, highest expression in lung and peripheral leukocytes, and minor expression in liver and kidney.

The protein localises to the golgi apparatus membrane. This Homo sapiens (Human) protein is Golgi-associated plant pathogenesis-related protein 1 (GLIPR2).